The following is a 960-amino-acid chain: MADNNSSSGSLVIDEQDYDVHEAGQQGQQGQQKHQQRQQERPSLITRVFRSVFGYRKTSLSLFVVATIALCVSLSYIDNSVDFISFPTVESEVNLLNAAWLDLQVIAKEQHPYGSIGNDRVHDFLERRIQELITGANFITWDNDINGNNSFMFESSSNPKTVSYYESNNLLVKIEGKNAKLPGILLSSHFDSVPTSYGVTDDGMGVASMLGILNYFSQQKKQPERTIVMNFNNNEEFGLLGATAFTRHPWFKLVKYFLNLEGTGAGGKAILFRATDYGIAKYFQNVRTPYASSIFQQGFANGLVHSETDYKVYKEAGMRGLDLAFFKPRDYYHTAEDNIRRTSEKSLWHMLSNSLDFIDYLSKDKEFGMNLEEKPNLLEEPAVFASFLNYFFTISTSQLFKINVALLTVFPILNGLLLLYTIRSRKWQVSFSSAISIPVALLVTMFIVVYLVVESYKSFNQYLPSSRPLLLVATITSILLLVFSIILVAFSFFSIIAEENLRLLAIVELSFAYWVGLAFTTHGLSGAESARHSGEFAVSILFTLEAVASFLGLIGWSLCRNRSHLQVAEGESVPLLNGIDARYSSDNDHDHEHRHGHEDNEHGEAHVQQQSQSRHKKQCKETVHSFGYDWSLQYLITVPLSIFIIYNSGWLVLEGVNKTLQESAKAETFVYNLLWIVSVSLVLPLIPFAGKLNRYMVFVLIAIGVLGTLLVHVVQPFNEANPLKLRFLQRIDGKNNASSVHVYARKGLATEVLEQLPSVRQSNETIHCSQLADGMEDCSFVSALAPQILPGYELGNYIEVTNNGSAPSQLFGVNYNQIKIVALKSQSCSLHFGDSKVKAVVVGSSLESAPAFKHLPSGYSFNKDHFYKDTSGIWNLTLNKLDSHSSFDISLYWLPGIDDEANTLQFDVECFWADLSPVALNNTVFEAIPAFNEVQQYSPISVSWANREKGLVAYTKQVHV.

Over 1 to 57 (MADNNSSSGSLVIDEQDYDVHEAGQQGQQGQQKHQQRQQERPSLITRVFRSVFGYRK) the chain is Cytoplasmic. A disordered region spans residues 22-41 (EAGQQGQQGQQKHQQRQQER). Over residues 24-33 (GQQGQQGQQK) the composition is skewed to low complexity. Residues 58–78 (TSLSLFVVATIALCVSLSYID) form a helical membrane-spanning segment. Over 79–401 (NSVDFISFPT…FTISTSQLFK (323 aa)) the chain is Vacuolar. An N-linked (GlcNAc...) asparagine glycan is attached at Asn148. His189 and Asp201 together coordinate Zn(2+). Glu235 serves as the catalytic Proton acceptor. The Zn(2+) site is built by Glu236, Glu261, and His333. The chain crosses the membrane as a helical span at residues 402-422 (INVALLTVFPILNGLLLLYTI). The Cytoplasmic segment spans residues 423–432 (RSRKWQVSFS). A helical transmembrane segment spans residues 433 to 453 (SAISIPVALLVTMFIVVYLVV). Topologically, residues 454–476 (ESYKSFNQYLPSSRPLLLVATIT) are vacuolar. Residues 477–497 (SILLLVFSIILVAFSFFSIIA) form a helical membrane-spanning segment. Residues 498–502 (EENLR) are Cytoplasmic-facing. The chain crosses the membrane as a helical span at residues 503 to 523 (LLAIVELSFAYWVGLAFTTHG). The Vacuolar portion of the chain corresponds to 524–535 (LSGAESARHSGE). A helical membrane pass occupies residues 536-556 (FAVSILFTLEAVASFLGLIGW). Residues 557 to 635 (SLCRNRSHLQ…FGYDWSLQYL (79 aa)) lie on the Cytoplasmic side of the membrane. Basic and acidic residues predominate over residues 587 to 605 (NDHDHEHRHGHEDNEHGEA). The segment at 587–614 (NDHDHEHRHGHEDNEHGEAHVQQQSQSR) is disordered. Residues 636 to 656 (ITVPLSIFIIYNSGWLVLEGV) form a helical membrane-spanning segment. Asn657 carries N-linked (GlcNAc...) asparagine glycosylation. Residues 657–668 (NKTLQESAKAET) are Vacuolar-facing. A helical membrane pass occupies residues 669–689 (FVYNLLWIVSVSLVLPLIPFA). The Cytoplasmic portion of the chain corresponds to 690–696 (GKLNRYM). The helical transmembrane segment at 697–717 (VFVLIAIGVLGTLLVHVVQPF) threads the bilayer. The Vacuolar segment spans residues 718–960 (NEANPLKLRF…LVAYTKQVHV (243 aa)). Residues Asn736, Asn763, Asn803, Asn875, and Asn921 are each glycosylated (N-linked (GlcNAc...) asparagine).

Belongs to the peptidase M28 family. Requires Zn(2+) as cofactor.

The protein resides in the vacuole membrane. May be involved in vacuolar sorting and osmoregulation. In Lodderomyces elongisporus (strain ATCC 11503 / CBS 2605 / JCM 1781 / NBRC 1676 / NRRL YB-4239) (Yeast), this protein is Vacuolar membrane protease.